Reading from the N-terminus, the 457-residue chain is Putative methyltransferase MT1451 (457 aa).

S-adenosyl-L-methionine is bound by residues 276-282 (CAGPGGK), E301, D325, and D341. The active-site Nucleophile is C394.

This sequence belongs to the class I-like SAM-binding methyltransferase superfamily. RsmB/NOP family.

In terms of biological role, may act as RNA methyltransferase. The polypeptide is Putative methyltransferase MT1451 (Mycobacterium tuberculosis (strain CDC 1551 / Oshkosh)).